The primary structure comprises 36 residues: MKVGIMGGTGNIGEGLARRIXIGGKYDVMIKGRDKA.

Residue 9–12 coordinates NADP(+); that stretch reads TGNI.

It belongs to the F420-dependent NADP reductase family. As to quaternary structure, homotetramer.

It catalyses the reaction reduced coenzyme F420-(gamma-L-Glu)(n) + NADP(+) = oxidized coenzyme F420-(gamma-L-Glu)(n) + NADPH + 2 H(+). Its function is as follows. Catalyzes the reduction of NADP(+) with F420H(2) via hydride transfer, and the reverse reaction, i.e. the reduction of F420 with NADPH. In M.organophilum, an alcohol-fermenting methanogen containing an NADP-dependent alcohol dehydrogenase, is probably involved in the regeneration of F420H(2) required for CO(2) reduction to methane. Thus, during growth on alcohol and CO(2), the F420-dependent NADP reductase probably has the function of coupling the NADP-dependent oxidation of the alcohol to the aldehyde with the F420-dependent reduction of CO(2) to methane. This is F420-dependent NADP reductase (fno) from Methanogenium organophilum.